An 837-amino-acid polypeptide reads, in one-letter code: Phosphatidylinositol-glycan-specific phospholipase D (837 aa).

Positions 1–23 (MSAGRLWSSLLLLLPLFCSKSSS) are cleaved as a signal peptide. Asn-94, Asn-267, Asn-287, Asn-303, and Asn-317 each carry an N-linked (GlcNAc...) asparagine glycan. FG-GAP repeat units lie at residues 364-425 (SPSA…GLPP), 431-492 (NKEG…GRLS), 494-554 (SPNV…RNDK), 561-619 (EADW…SLGK), 629-689 (QSTI…GATR), 701-767 (ALLS…TLGD), and 785-837 (QYVL…FSSD). N-linked (GlcNAc...) asparagine glycosylation is found at Asn-477, Asn-496, Asn-586, Asn-599, and Asn-655.

Belongs to the GPLD1 family. As to quaternary structure, monomer. As to expression, widely expressed.

It is found in the secreted. It carries out the reaction a 6-(alpha-D-glucosaminyl)-1-(1,2-diacyl-sn-glycero-3-phospho)-1D-myo-inositol + H2O = 6-(alpha-D-glucosaminyl)-1D-myo-inositol + a 1,2-diacyl-sn-glycero-3-phosphate + H(+). In terms of biological role, this protein hydrolyzes the inositol phosphate linkage in proteins anchored by phosphatidylinositol glycans (GPI-anchor) thus releasing these proteins from the membrane. The protein is Phosphatidylinositol-glycan-specific phospholipase D (Gpld1) of Mus musculus (Mouse).